Here is a 474-residue protein sequence, read N- to C-terminus: RNA-binding protein Nova-1 (474 aa).

The segment covering 1-12 (MAAAPIQQNGTH) has biased composition (polar residues). The interval 1–43 (MAAAPIQQNGTHTGVPIDLDPPDSRKRPLEAPPEAGSTKRTNT) is disordered. Positions 26–42 (KRPLEAPPEAGSTKRTN) match the Bipartite nuclear localization signal motif. KH domains follow at residues 48 to 115 (QYFL…HGFI), 146 to 212 (IKQV…VELI), and 396 to 463 (KDVV…QYLI). Residues 394–474 (GSKDVVEIAV…QRITYEQGVR (81 aa)) are required for RNA binding.

In terms of assembly, interacts with PTBP2; the interaction is direct.

It is found in the nucleus. In terms of biological role, functions to regulate alternative splicing in neurons by binding pre-mRNA in a sequence-specific manner to activate exon inclusion or exclusion. It binds specifically to the sequences 5'-YCAY-3' and regulates splicing in only a subset of regulated exons. Binding to an exonic 5'-YCAY-3' cluster changes the protein complexes assembled on pre-mRNA, blocking U1 snRNP binding and exon inclusion, whereas binding to an intronic 5'-YCAY-3' cluster enhances spliceosome assembly and exon inclusion. Binding to 5'-YCAY-3' clusters results in a local and asymmetric action to regulate spliceosome assembly and alternative splicing in neurons. Binding to an exonic 5'-YCAY-3' cluster changed the protein complexes assembled on pre-mRNA, blocking U1 snRNP (small nuclear ribonucleoprotein) binding and exon inclusion, whereas binding to an intronic 5'-YCAY-3' cluster enhanced spliceosome assembly and exon inclusion. With NOVA1, they perform unique biological functions in different brain areas and cell types. Autoregulates its own expression by acting as a splicing repressor. Acts to activate the inclusion of exon E3A in the glycine receptor alpha-2 chain and of exon E9 in gamma-aminobutyric-acid receptor gamma-2 subunit via a distal downstream UCAU-rich intronic splicing enhancer. Acts to regulate a novel glycine receptor alpha-2 chain splice variant (alpha-2N) in developing spinal cord. In Rattus norvegicus (Rat), this protein is RNA-binding protein Nova-1.